Reading from the N-terminus, the 506-residue chain is Squalene monooxygenase 1,1 (506 aa).

A run of 2 helical transmembrane segments spans residues 3 to 23 (LAFPHVCLWTLLAFVLTWTVF) and 47 to 67 (DADVIIVGAGVGGSALAYALA). FAD-binding positions include 57-58 (VG), 77-78 (ER), arginine 85, phenylalanine 90, arginine 157, valine 173, aspartate 336, and methionine 349. The helical transmembrane segment at 447-467 (LIFHLCGITLSSIGQLLSPFP) threads the bilayer.

Belongs to the squalene monooxygenase family. It depends on FAD as a cofactor.

It localises to the membrane. It carries out the reaction squalene + reduced [NADPH--hemoprotein reductase] + O2 = (S)-2,3-epoxysqualene + oxidized [NADPH--hemoprotein reductase] + H2O + H(+). The protein operates within terpene metabolism; lanosterol biosynthesis; lanosterol from farnesyl diphosphate: step 2/3. Catalyzes the stereospecific oxidation of squalene to (S)-2,3-epoxysqualene, and is considered to be a rate-limiting enzyme in steroid biosynthesis. The polypeptide is Squalene monooxygenase 1,1 (SQP1,1) (Brassica napus (Rape)).